Here is a 66-residue protein sequence, read N- to C-terminus: Sec-independent protein translocase protein TatA (66 aa).

A helical transmembrane segment spans residues 1–21 (MSIGIWQIAIVVILVVLLFGR). Positions 43-66 (ATDITDEPEPKNVSENNQDSKDKE) are disordered. Residues 50–66 (PEPKNVSENNQDSKDKE) are compositionally biased toward basic and acidic residues.

Belongs to the TatA/E family. As to quaternary structure, the Tat system comprises two distinct complexes: a TatABC complex, containing multiple copies of TatA, TatB and TatC subunits, and a separate TatA complex, containing only TatA subunits. Substrates initially bind to the TatABC complex, which probably triggers association of the separate TatA complex to form the active translocon.

The protein resides in the cell inner membrane. Functionally, part of the twin-arginine translocation (Tat) system that transports large folded proteins containing a characteristic twin-arginine motif in their signal peptide across membranes. TatA could form the protein-conducting channel of the Tat system. The protein is Sec-independent protein translocase protein TatA of Pelagibacter ubique (strain HTCC1062).